A 180-amino-acid chain; its full sequence is ATP synthase subunit b, plastid (180 aa).

A helical membrane pass occupies residues 27–49 (LVTTLINIAVVLSLLIVFGKGFL).

The protein belongs to the ATPase B chain family. F-type ATPases have 2 components, F(1) - the catalytic core - and F(0) - the membrane proton channel. F(1) has five subunits: alpha(3), beta(3), gamma(1), delta(1), epsilon(1). F(0) has four main subunits: a(1), b(1), b'(1) and c(10-14). The alpha and beta chains form an alternating ring which encloses part of the gamma chain. F(1) is attached to F(0) by a central stalk formed by the gamma and epsilon chains, while a peripheral stalk is formed by the delta, b and b' chains.

Its subcellular location is the plastid membrane. Functionally, f(1)F(0) ATP synthase produces ATP from ADP in the presence of a proton or sodium gradient. F-type ATPases consist of two structural domains, F(1) containing the extramembraneous catalytic core and F(0) containing the membrane proton channel, linked together by a central stalk and a peripheral stalk. During catalysis, ATP synthesis in the catalytic domain of F(1) is coupled via a rotary mechanism of the central stalk subunits to proton translocation. Its function is as follows. Component of the F(0) channel, it forms part of the peripheral stalk, linking F(1) to F(0). This is ATP synthase subunit b, plastid from Cuscuta gronovii (Common dodder).